The sequence spans 606 residues: Large subunit GTPase 1 homolog (606 aa).

A disordered region spans residues M1–F21. The 231-residue stretch at W165–P395 folds into the CP-type G domain. A GTP-binding site is contributed by N213–D216. Phosphoserine occurs at positions 276 and 279. Residues G344–S351 and D388–G391 contribute to the GTP site. Residues L574–H606 form a disordered region. Positions P584–F600 are enriched in basic residues.

The protein belongs to the TRAFAC class YlqF/YawG GTPase family. LSG1 subfamily. In terms of tissue distribution, expressed in larval serotonergic neurons.

The protein localises to the cytoplasm. Functionally, GTPase required for the nuclear export of the 60S ribosomal subunit. Probably acts by mediating the release of Nmd3 from the 60S ribosomal subunit after export into the cytoplasm. Regulator of body size; acts in serotonergic neurons to regulate insulin signaling and thus exerts global growth control. The sequence is that of Large subunit GTPase 1 homolog (Ns3) from Drosophila melanogaster (Fruit fly).